The chain runs to 320 residues: Phosphatidylserine decarboxylase proenzyme (320 aa).

Catalysis depends on charge relay system; for autoendoproteolytic cleavage activity residues aspartate 90, histidine 147, and serine 254. Serine 254 functions as the Schiff-base intermediate with substrate; via pyruvic acid; for decarboxylase activity in the catalytic mechanism. Residue serine 254 is modified to Pyruvic acid (Ser); by autocatalysis. The interval 288 to 320 (EASTAAEPAPLPEEEIRAEHRASPLVDDTQDQG) is disordered.

Belongs to the phosphatidylserine decarboxylase family. PSD-B subfamily. Prokaryotic type I sub-subfamily. As to quaternary structure, heterodimer of a large membrane-associated beta subunit and a small pyruvoyl-containing alpha subunit. Requires pyruvate as cofactor. Post-translationally, is synthesized initially as an inactive proenzyme. Formation of the active enzyme involves a self-maturation process in which the active site pyruvoyl group is generated from an internal serine residue via an autocatalytic post-translational modification. Two non-identical subunits are generated from the proenzyme in this reaction, and the pyruvate is formed at the N-terminus of the alpha chain, which is derived from the carboxyl end of the proenzyme. The autoendoproteolytic cleavage occurs by a canonical serine protease mechanism, in which the side chain hydroxyl group of the serine supplies its oxygen atom to form the C-terminus of the beta chain, while the remainder of the serine residue undergoes an oxidative deamination to produce ammonia and the pyruvoyl prosthetic group on the alpha chain. During this reaction, the Ser that is part of the protease active site of the proenzyme becomes the pyruvoyl prosthetic group, which constitutes an essential element of the active site of the mature decarboxylase.

The protein resides in the cell membrane. The catalysed reaction is a 1,2-diacyl-sn-glycero-3-phospho-L-serine + H(+) = a 1,2-diacyl-sn-glycero-3-phosphoethanolamine + CO2. The protein operates within phospholipid metabolism; phosphatidylethanolamine biosynthesis; phosphatidylethanolamine from CDP-diacylglycerol: step 2/2. In terms of biological role, catalyzes the formation of phosphatidylethanolamine (PtdEtn) from phosphatidylserine (PtdSer). This Klebsiella pneumoniae (strain 342) protein is Phosphatidylserine decarboxylase proenzyme.